The primary structure comprises 716 residues: 1,4-alpha-glucan branching enzyme GlgB (716 aa).

The active-site Nucleophile is the Asp398. Glu451 functions as the Proton donor in the catalytic mechanism.

It belongs to the glycosyl hydrolase 13 family. GlgB subfamily. Monomer.

It catalyses the reaction Transfers a segment of a (1-&gt;4)-alpha-D-glucan chain to a primary hydroxy group in a similar glucan chain.. The protein operates within glycan biosynthesis; glycogen biosynthesis. Its function is as follows. Catalyzes the formation of the alpha-1,6-glucosidic linkages in glycogen by scission of a 1,4-alpha-linked oligosaccharide from growing alpha-1,4-glucan chains and the subsequent attachment of the oligosaccharide to the alpha-1,6 position. The polypeptide is 1,4-alpha-glucan branching enzyme GlgB (Nitrobacter hamburgensis (strain DSM 10229 / NCIMB 13809 / X14)).